Reading from the N-terminus, the 543-residue chain is Periplasmic oligopeptide-binding protein OppA (543 aa).

The N-terminal stretch at 1–26 is a signal peptide; sequence MSNITKKSLIAAGILTALIAASAATA. The cysteines at positions 297 and 443 are disulfide-linked.

This sequence belongs to the bacterial solute-binding protein 5 family. In terms of assembly, the complex is composed of two ATP-binding proteins (OppD and OppF), two transmembrane proteins (OppB and OppC) and a solute-binding protein (OppA).

Its subcellular location is the periplasm. Its function is as follows. Part of the ABC transporter complex OppABCDF involved in the uptake of oligopeptides, including the cell wall murein tripeptide L-alanyl-gamma-D-glutamyl-meso-diaminopimelate. Plays an important nutritional role and is involved in the recycling of cell wall peptides. Binds peptides containing from two to five amino acid residues regardless of their sequence. Also binds cell wall peptides, such as L-alanyl-gamma-D-glutamyl-meso-diaminopimelate. This is Periplasmic oligopeptide-binding protein OppA from Salmonella typhimurium (strain LT2 / SGSC1412 / ATCC 700720).